The primary structure comprises 304 residues: Protein ML (304 aa).

In terms of biological role, blocks host IRF3 and IRF7, thereby inhibiting IFN-beta expression and activation of host antiviral state. This is Protein ML from Thogoto virus (isolate SiAr 126) (Tho).